The sequence spans 2715 residues: Cilia- and flagella-associated protein 46 (2715 aa).

TPR repeat units follow at residues 89–122 (CRAQ…AKGE), 175–208 (AELM…IKSH), 261–295 (GDIS…LLFE), 324–359 (PGKL…AQLD), 426–459 (CQVH…DSLG), 469–503 (STRL…TPKD), 807–845 (SRKF…TNGS), 936–969 (LQTL…GIKY), 1111–1144 (AALY…LPRT), and 1174–1211 (AESE…LQKP). The tract at residues 1356-1412 (SHLLLPKKEKENERSKEKEKERSKEKENERSKEKDKEKGKEEKVKEPKQSQSPAPIK) is disordered. The span at 1361–1403 (PKKEKENERSKEKEKERSKEKENERSKEKDKEKGKEEKVKEPK) shows a compositional bias: basic and acidic residues. Positions 1362 to 1401 (KKEKENERSKEKEKERSKEKENERSKEKDKEKGKEEKVKE) form a coiled coil. A TPR 11 repeat occupies 1639–1672 (AQCLLLLAQLANKEKNYGQAKKMIAQAQHLGGSE). A coiled-coil region spans residues 1781-1810 (VDVKLERAKIKRLRAQNEKDEEQKTAYYLE). Disordered regions lie at residues 2000–2023 (EEEG…EHCR), 2294–2319 (AVVA…HSTV), and 2371–2399 (ETEG…KGSI). 2 stretches are compositionally biased toward basic and acidic residues: residues 2300-2311 (GKSKGKDKERKT) and 2371-2383 (ETEG…GRSR). Basic residues predominate over residues 2384–2398 (DPKKRSLAKKGRKGS). TPR repeat units follow at residues 2399 to 2432 (IPRT…EMLT) and 2504 to 2537 (VAVL…EANW). A disordered region spans residues 2541–2567 (ASPSEDEWRRGGEPRRGFSDLEGQAAA). Residues 2546 to 2559 (DEWRRGGEPRRGFS) are compositionally biased toward basic and acidic residues.

The protein belongs to the CFAP46 family.

The protein localises to the cytoplasm. Its subcellular location is the cytoskeleton. It is found in the cilium axoneme. Functionally, as part of the central apparatus of the cilium axoneme plays a role in cilium movement. This Homo sapiens (Human) protein is Cilia- and flagella-associated protein 46.